The chain runs to 203 residues: 5-formyltetrahydrofolate cyclo-ligase (203 aa).

Alanine 2 bears the N-acetylalanine mark. ATP is bound by residues 10-14 (KRGLR) and arginine 14. Substrate contacts are provided by residues leucine 56, glutamate 61, and 148-152 (RGKGY). 145–153 (RLGRGKGYY) lines the ATP pocket. Mg(2+)-binding residues include aspartate 154 and aspartate 189.

The protein belongs to the 5-formyltetrahydrofolate cyclo-ligase family. Monomer. It depends on Mg(2+) as a cofactor.

The protein localises to the cytoplasm. The enzyme catalyses (6S)-5-formyl-5,6,7,8-tetrahydrofolate + ATP = (6R)-5,10-methenyltetrahydrofolate + ADP + phosphate. Its function is as follows. Contributes to tetrahydrofolate metabolism. Helps regulate carbon flow through the folate-dependent one-carbon metabolic network that supplies carbon for the biosynthesis of purines, thymidine and amino acids. Catalyzes the irreversible conversion of 5-formyltetrahydrofolate (5-CHO-H(4)PteGlu) to yield 5,10-methenyltetrahydrofolate. This is 5-formyltetrahydrofolate cyclo-ligase (Mthfs) from Mus musculus (Mouse).